The sequence spans 123 residues: uncharacterized protein (123 aa).

This is an uncharacterized protein from Acanthamoeba polyphaga mimivirus (APMV).